The sequence spans 409 residues: MTYPERPLLHLLTRTSLVGQIIVGLIAGLLLASFFPAAALKVGFIGKVFVSALKAVAPVLVFVLVMASIANHRQGQQTHIRPILLLYLVGTFSAAVVAVIASFAFPSSLVLASHPGEMSPPGGIAEVLQSLLLSVVDNPVNALISANFIGILAWAIGLGIAFRHASDTTRNLLSELSNGVSLIVKVVIRFAPLGIFGLVASTFAESGVEALKGYAHLLVVLLGCMLFVAFVVNPLIVFLKIRRNPYPLVLTCLRESGMTAFFTRSSAANIPVNLQLCERLGLHEDTYSVSIPLGATINMAGAAITITVLTLAAVHTLGIAVDVPTAILLSVVASICACGASGVAGGSLLLIPLACSLFGIPSEVAMQVVAVGFIIAILQDSAETALNSSTDVLFTAAACEAEERKASAA.

9 helical membrane passes run 17-37, 49-69, 83-103, 142-162, 180-200, 218-238, 301-321, 331-351, and 357-377; these read LVGQIIVGLIAGLLLASFFPA, FVSALKAVAPVLVFVLVMASI, ILLLYLVGTFSAAVVAVIASF, ALISANFIGILAWAIGLGIAF, VSLIVKVVIRFAPLGIFGLVA, LVVLLGCMLFVAFVVNPLIVF, GAAITITVLTLAAVHTLGIAV, VVASICACGASGVAGGSLLLI, and LFGIPSEVAMQVVAVGFIIAI.

The protein belongs to the dicarboxylate/amino acid:cation symporter (DAACS) (TC 2.A.23) family.

It is found in the cell inner membrane. It catalyses the reaction L-serine(in) + Na(+)(in) = L-serine(out) + Na(+)(out). The enzyme catalyses L-threonine(in) + Na(+)(in) = L-threonine(out) + Na(+)(out). Its function is as follows. Involved in the import of serine and threonine into the cell, with the concomitant import of sodium (symport system). This is Serine/threonine transporter SstT from Pseudomonas aeruginosa (strain LESB58).